Here is a 53-residue protein sequence, read N- to C-terminus: IgW transmembrane form Tm1T3/Tm6T3/Tm3C4 (53 aa).

The segment at 1 to 25 (VQAVPPDVKGEEGKEEVEDMDGDDN) is disordered. The segment covering 13–24 (GKEEVEDMDGDD) has biased composition (acidic residues). A helical membrane pass occupies residues 29 to 49 (VAAFAILFILSFLYSTFVTVV).

In terms of tissue distribution, expressed in the spleen, pancreas, peripheral blood lymphocytes and at low levels in the epigonal organ.

Its subcellular location is the membrane. The sequence is that of IgW transmembrane form Tm1T3/Tm6T3/Tm3C4 from Ginglymostoma cirratum (Nurse shark).